Reading from the N-terminus, the 432-residue chain is Homogentisate 1,2-dioxygenase (432 aa).

His-286 functions as the Proton acceptor in the catalytic mechanism. The Fe cation site is built by His-329 and Glu-335. Positions 344 and 365 each coordinate homogentisate. His-365 contacts Fe cation.

Belongs to the homogentisate dioxygenase family. Hexamer; dimer of trimers. The cofactor is Fe cation.

It catalyses the reaction homogentisate + O2 = 4-maleylacetoacetate + H(+). Its pathway is amino-acid degradation; L-phenylalanine degradation; acetoacetate and fumarate from L-phenylalanine: step 4/6. Functionally, involved in the catabolism of homogentisate (2,5-dihydroxyphenylacetate or 2,5-OH-PhAc), a central intermediate in the degradation of phenylalanine and tyrosine. Catalyzes the oxidative ring cleavage of the aromatic ring of homogentisate to yield maleylacetoacetate. This chain is Homogentisate 1,2-dioxygenase, found in Bordetella bronchiseptica (strain ATCC BAA-588 / NCTC 13252 / RB50) (Alcaligenes bronchisepticus).